We begin with the raw amino-acid sequence, 268 residues long: Myeloid leukemia factor 1 (268 aa).

Serine 6, serine 8, and serine 32 each carry phosphoserine. An interaction with COPS3 region spans residues 50-125; that stretch reads RVHNRRGHND…IGDEPPKVFQ (76 aa). The disordered stretch occupies residues 208-268; the sequence is PGRHNLENTR…KGSSVKSNKK (61 aa). 2 stretches are compositionally biased toward basic and acidic residues: residues 226-237 and 244-257; these read PGSRELKRREKP and EHGRRSDVLGDKLH.

Belongs to the MLF family. Interacts with CENPU. Also interacts with NRBP1/MADM, YWHAZ/14-3-3-zeta and HNRPUL2/MANP. NRBP1 recruits a serine kinase which phosphorylates both itself and MLF1. Phosphorylated MLF1 then binds to YWHAZ and is retained in the cytoplasm. Retained in the nucleus by binding to HNRPUL2. Binds to COPS3/CSN3 which is required for suppression of COP1 and activation of p53. Post-translationally, phosphorylation is required for binding to YWHAZ.

The protein localises to the cytoplasm. It localises to the nucleus. It is found in the cell projection. The protein resides in the cilium. Its subcellular location is the cytoskeleton. The protein localises to the cilium basal body. In terms of biological role, involved in lineage commitment of primary hemopoietic progenitors by restricting erythroid formation and enhancing myeloid formation. Interferes with erythropoietin-induced erythroid terminal differentiation by preventing cells from exiting the cell cycle through suppression of CDKN1B/p27Kip1 levels. Suppresses COP1 activity via CSN3 which activates p53 and induces cell cycle arrest. Binds DNA and affects the expression of a number of genes so may function as a transcription factor in the nucleus. This chain is Myeloid leukemia factor 1 (MLF1), found in Pongo abelii (Sumatran orangutan).